Consider the following 255-residue polypeptide: Imidazole glycerol phosphate synthase subunit HisF (255 aa).

Active-site residues include D11 and D130.

This sequence belongs to the HisA/HisF family. Heterodimer of HisH and HisF.

It is found in the cytoplasm. The catalysed reaction is 5-[(5-phospho-1-deoxy-D-ribulos-1-ylimino)methylamino]-1-(5-phospho-beta-D-ribosyl)imidazole-4-carboxamide + L-glutamine = D-erythro-1-(imidazol-4-yl)glycerol 3-phosphate + 5-amino-1-(5-phospho-beta-D-ribosyl)imidazole-4-carboxamide + L-glutamate + H(+). It functions in the pathway amino-acid biosynthesis; L-histidine biosynthesis; L-histidine from 5-phospho-alpha-D-ribose 1-diphosphate: step 5/9. Its function is as follows. IGPS catalyzes the conversion of PRFAR and glutamine to IGP, AICAR and glutamate. The HisF subunit catalyzes the cyclization activity that produces IGP and AICAR from PRFAR using the ammonia provided by the HisH subunit. This Akkermansia muciniphila (strain ATCC BAA-835 / DSM 22959 / JCM 33894 / BCRC 81048 / CCUG 64013 / CIP 107961 / Muc) protein is Imidazole glycerol phosphate synthase subunit HisF.